A 151-amino-acid chain; its full sequence is Small ribosomal subunit protein uS13 (151 aa).

This sequence belongs to the universal ribosomal protein uS13 family. In terms of assembly, part of the 30S ribosomal subunit. Forms a loose heterodimer with protein S19. Forms two bridges to the 50S subunit in the 70S ribosome.

Located at the top of the head of the 30S subunit, it contacts several helices of the 16S rRNA. In the 70S ribosome it contacts the 23S rRNA (bridge B1a) and protein L5 of the 50S subunit (bridge B1b), connecting the 2 subunits; these bridges are implicated in subunit movement. The polypeptide is Small ribosomal subunit protein uS13 (Hyperthermus butylicus (strain DSM 5456 / JCM 9403 / PLM1-5)).